A 361-amino-acid polypeptide reads, in one-letter code: Protein SGT1 homolog (361 aa).

TPR repeat units lie at residues 3 to 36 (ASDL…GPAT), 37 to 70 (ADLY…DPTM), and 71 to 104 (HKAY…APGD). Position 150 is a phosphothreonine (Thr-150). The CS domain maps to 159–248 (KPKYRHDYYN…AEQVTWTTLD (90 aa)). Residues 255–295 (AIPQKISTPAETAPRPSYPSSKSKKDWDKLEAEVKKEEKEE) form a disordered region. The residue at position 262 (Thr-262) is a Phosphothreonine. Residues 271-361 (SYPSSKSKKD…DGMELKKWEI (91 aa)) enclose the SGS domain. Residues 277-295 (SKKDWDKLEAEVKKEEKEE) are compositionally biased toward basic and acidic residues.

The protein belongs to the SGT1 family. In terms of processing, constitutively phosphorylated at Thr-262 and phosphorylated at Thr-150 upon infection with the fungal pathogen Ustilago maydis.

It is found in the cytoplasm. The protein resides in the nucleus. Functionally, may act as positive regulator of basal defense. May be involved in basal disease resistance to the fungal pathogen Ustilago maydis. The sequence is that of Protein SGT1 homolog from Zea mays (Maize).